The chain runs to 142 residues: Nucleoside diphosphate kinase (142 aa).

ATP is bound by residues K11, F59, R87, T93, R104, and N114. H117 (pros-phosphohistidine intermediate) is an active-site residue.

The protein belongs to the NDK family. Homotetramer. Requires Mg(2+) as cofactor.

It is found in the cytoplasm. The catalysed reaction is a 2'-deoxyribonucleoside 5'-diphosphate + ATP = a 2'-deoxyribonucleoside 5'-triphosphate + ADP. It carries out the reaction a ribonucleoside 5'-diphosphate + ATP = a ribonucleoside 5'-triphosphate + ADP. Functionally, major role in the synthesis of nucleoside triphosphates other than ATP. The ATP gamma phosphate is transferred to the NDP beta phosphate via a ping-pong mechanism, using a phosphorylated active-site intermediate. This Marinobacter nauticus (strain ATCC 700491 / DSM 11845 / VT8) (Marinobacter aquaeolei) protein is Nucleoside diphosphate kinase.